The chain runs to 397 residues: Purine nucleoside transport protein NupG (397 aa).

11 helical membrane-spanning segments follow: residues 1–21 (MYFLLNLVGLIVIMAVVFLCS), 32–52 (IITLIVLELLITWFMLGTKVG), 62–82 (FFTWLIACASDGIAFAFPSVM), 97–117 (IIFIVTFFDILTYFGILPWLI), 133–153 (LESFFSIQMMFLGNTEALAVI), 165–185 (LLTFGLMSMSSISGSIIGSYL), 187–207 (MVPATYVFTAIPLNCLNALII), 242–262 (MLVGMNMVIVILAMVIGYVAL), 282–302 (IFAYLFSPFAFLLGLPVHDAM), 335–355 (VAVATTFLTSFANFSTVGMIY), and 377–397 (LLVSGIAVSLLSAAIVGLFVW).

This sequence belongs to the concentrative nucleoside transporter (CNT) (TC 2.A.41) family.

The protein localises to the cell membrane. Its function is as follows. Involved in the uptake of the purine ribonucleosides inosine and guanosine. The sequence is that of Purine nucleoside transport protein NupG (nupG) from Bacillus subtilis (strain 168).